A 161-amino-acid chain; its full sequence is MSYVPHVPYVPTPEKVVRRMLEIAKVSQDDIVYDLGCGDGRIIITAAKDFNVKKAVGVEINDERIREALANIEKNGVTGRASIVKGNFFEVDISEATVVTMFLLTNVNEMLKPKLEKELKPGTRVVSHEFEIRGWNPKEVIKVEDGNMNHTVYLYVIGEHK.

The short motif at 34–40 (DLGCGDG) is the DxGxGxG SAM-binding motif element.

Belongs to the class I-like SAM-binding methyltransferase superfamily. Monomer.

The catalysed reaction is L-lysyl-[protein] + S-adenosyl-L-methionine = N(6)-methyl-L-lysyl-[protein] + S-adenosyl-L-homocysteine + H(+). Its function is as follows. Catalyzes the methylation of lysine residues in target proteins, using S-adenosyl-L-methionine (SAM) as the methyl donor. Exhibits broad substrate specificity, being able to methylate the crenarchaeal chromatin protein Cren7 primarily at 'Lys-11', 'Lys-16' and 'Lys-31', as well as a number of recombinant Sulfolobus proteins in vitro. Methylates lysine residues in a rather sequence-independent manner. This is Protein-lysine N-methyltransferase from Saccharolobus islandicus (strain REY15A) (Sulfolobus islandicus).